Consider the following 292-residue polypeptide: Nanos homolog 1 (292 aa).

Disordered regions lie at residues 1-41 (MEAF…QPFS) and 68-121 (GGNG…SRGR). The essential for its translational repressor activity stretch occupies residues 40 to 56 (FSSWNDYLGLATLITKA). Low complexity predominate over residues 76-87 (PPSSSSSSCCSP). Acidic residues predominate over residues 104–115 (DYDEDDDDDSDE). The Nanos-type zinc finger occupies 213-267 (VCVFCRNNKEAMALYTTHILKGPDGRVLCPVLRRYTCPLCGASGDNAHTIKYCPL). Zn(2+)-binding residues include cysteine 214, cysteine 217, histidine 230, cysteine 241, cysteine 249, cysteine 252, histidine 260, and cysteine 265. 2 short sequence motifs (C2HC) span residues 214-241 (CVFC…RVLC) and 249-265 (CPLC…IKYC). Residues 268–292 (SKVPPPPARPPPRSARDGPPGKKLR) form a disordered region. A compositionally biased stretch (pro residues) spans 269–280 (KVPPPPARPPPR). The span at 281 to 292 (SARDGPPGKKLR) shows a compositional bias: basic and acidic residues.

This sequence belongs to the nanos family. In terms of assembly, interacts with PUM2, SNAPIN and CTNNB1. Interacts (via N-terminal region) with CTNND1. Interacts with DDX20 (via N-terminal region). In terms of tissue distribution, testis and ovary (at protein level). Predominantly expressed in testis. Specifically expressed during germline development. In adult tissues, it is mainly expressed in spermatogonia, the stem cells of the germline. Also expressed during meiosis in spermatocytes. Not present in late, post-meiotic stage germ cells. Expressed in fetal ovaries, while it is weakly or not expressed in mature postmeiotic oocytes, suggesting that it may be expressed in premeiotic female germ cells. Expressed at high levels only in the E-cadherin deficient cell lines. Highly expressed in lung carcinomas and mostly detected in invasive tumor cells and its expression correlates with tumor aggressiveness.

It localises to the cytoplasm. The protein localises to the perinuclear region. Its function is as follows. May act as a translational repressor which regulates translation of specific mRNAs by forming a complex with PUM2 that associates with the 3'-UTR of mRNA targets. Capable of interfering with the proadhesive and anti-invasive functions of E-cadherin. Up-regulates the production of MMP14 to promote tumor cell invasion. In Homo sapiens (Human), this protein is Nanos homolog 1 (NANOS1).